The chain runs to 241 residues: Agamous-like MADS-box protein AP1 (241 aa).

The 61-residue stretch at 1–61 (MGRGRVQLKR…GKLFEYSTDS (61 aa)) folds into the MADS-box domain. The K-box domain maps to 88–178 (QGNWSLEYSK…AKEIKEKEKT (91 aa)).

Expressed in tendrils and flowers.

The protein resides in the nucleus. Functionally, probable transcription factor involved in flower development. The chain is Agamous-like MADS-box protein AP1 from Vitis vinifera (Grape).